The following is a 310-amino-acid chain: Tyrosine recombinase XerC (310 aa).

The region spanning 11 to 97 (NSLQKPLERF…SLRSFFDFLI (87 aa)) is the Core-binding (CB) domain. The region spanning 118–298 (PLPKNLDVDE…DFQHLAQAYD (181 aa)) is the Tyr recombinase domain. Residues arginine 157, lysine 181, histidine 250, arginine 253, and histidine 276 contribute to the active site. Tyrosine 285 functions as the O-(3'-phospho-DNA)-tyrosine intermediate in the catalytic mechanism.

Belongs to the 'phage' integrase family. XerC subfamily. As to quaternary structure, forms a cyclic heterotetrameric complex composed of two molecules of XerC and two molecules of XerD.

It localises to the cytoplasm. Site-specific tyrosine recombinase, which acts by catalyzing the cutting and rejoining of the recombining DNA molecules. The XerC-XerD complex is essential to convert dimers of the bacterial chromosome into monomers to permit their segregation at cell division. It also contributes to the segregational stability of plasmids. The protein is Tyrosine recombinase XerC of Vibrio parahaemolyticus serotype O3:K6 (strain RIMD 2210633).